Reading from the N-terminus, the 97-residue chain is Citrate lyase acyl carrier protein (97 aa).

An O-(phosphoribosyl dephospho-coenzyme A)serine modification is found at S14.

The protein belongs to the CitD family. Oligomer with a subunit composition of (alpha,beta,gamma)6.

The protein localises to the cytoplasm. Its function is as follows. Covalent carrier of the coenzyme of citrate lyase. The protein is Citrate lyase acyl carrier protein of Lactobacillus helveticus (strain DPC 4571).